We begin with the raw amino-acid sequence, 38 residues long: uncharacterized protein (38 aa).

This is an uncharacterized protein from Saccharomyces cerevisiae (strain ATCC 204508 / S288c) (Baker's yeast).